Here is a 93-residue protein sequence, read N- to C-terminus: UPF0358 protein BBR47_22520 (93 aa).

The protein belongs to the UPF0358 family.

The polypeptide is UPF0358 protein BBR47_22520 (Brevibacillus brevis (strain 47 / JCM 6285 / NBRC 100599)).